Reading from the N-terminus, the 447-residue chain is Putative branched-chain amino acid carrier protein SE_1090 (447 aa).

The next 12 helical transmembrane spans lie at 5-25 (TWIIGFTLFAMFFGAGNLIFP), 40-60 (ILAFALTGIGLPLLGVVVGAL), 74-94 (PRFSLIFLIIIYLTIGPLFAI), 114-134 (GNLALFIFTVIYFLIVLYLCL), 143-163 (IGSLLTPLLLITIVAMIIKGF), 193-213 (GYLTMDAIASIAFSMIVVNAI), 229-249 (IIAGLIAAIALVFIYISLGYI), 290-310 (LLGIIVSLACLTTACGLIVSV), 317-337 (ILPKIPYKVFVIFFILVSFIL), 350-370 (VPVLSVIYPVAITVILLILIA), 382-402 (IPLIIVAIESILSLITTQGWI), and 417-437 (LEWFPIAVVATLVGYMISYFV).

The protein belongs to the branched chain amino acid transporter family.

The protein resides in the cell membrane. Component of the transport system for branched-chain amino acids (leucine, isoleucine and valine), which is coupled to a proton motive force. The chain is Putative branched-chain amino acid carrier protein SE_1090 from Staphylococcus epidermidis (strain ATCC 12228 / FDA PCI 1200).